Here is a 211-residue protein sequence, read N- to C-terminus: tRNA (guanine-N(7)-)-methyltransferase (211 aa).

S-adenosyl-L-methionine contacts are provided by glutamate 44, aspartate 69, aspartate 96, and aspartate 118. Aspartate 118 is an active-site residue. A substrate-binding site is contributed by lysine 122. An interaction with RNA region spans residues 124–129; sequence RHEKRR. Substrate-binding positions include aspartate 154 and 191-194; that span reads TEYE.

It belongs to the class I-like SAM-binding methyltransferase superfamily. TrmB family.

It catalyses the reaction guanosine(46) in tRNA + S-adenosyl-L-methionine = N(7)-methylguanosine(46) in tRNA + S-adenosyl-L-homocysteine. Its pathway is tRNA modification; N(7)-methylguanine-tRNA biosynthesis. Catalyzes the formation of N(7)-methylguanine at position 46 (m7G46) in tRNA. The polypeptide is tRNA (guanine-N(7)-)-methyltransferase (Streptococcus pneumoniae (strain CGSP14)).